Reading from the N-terminus, the 365-residue chain is Histidinol-phosphate aminotransferase (365 aa).

The disordered stretch occupies residues 1–22 (MSRPVPNPGILDIAPYTPGKSP). Residue lysine 221 is modified to N6-(pyridoxal phosphate)lysine.

The protein belongs to the class-II pyridoxal-phosphate-dependent aminotransferase family. Histidinol-phosphate aminotransferase subfamily. In terms of assembly, homodimer. It depends on pyridoxal 5'-phosphate as a cofactor.

The catalysed reaction is L-histidinol phosphate + 2-oxoglutarate = 3-(imidazol-4-yl)-2-oxopropyl phosphate + L-glutamate. It participates in amino-acid biosynthesis; L-histidine biosynthesis; L-histidine from 5-phospho-alpha-D-ribose 1-diphosphate: step 7/9. The sequence is that of Histidinol-phosphate aminotransferase from Rhodopseudomonas palustris (strain BisA53).